Reading from the N-terminus, the 35-residue chain is Photosystem II reaction center protein T (35 aa).

Residues 3–23 (SVAYILILTLAIGVLFFAIAF) form a helical membrane-spanning segment.

The protein belongs to the PsbT family. PSII is composed of 1 copy each of membrane proteins PsbA, PsbB, PsbC, PsbD, PsbE, PsbF, PsbH, PsbI, PsbJ, PsbK, PsbL, PsbM, PsbT, PsbX, PsbY, PsbZ, Psb30/Ycf12, peripheral proteins PsbO, CyanoQ (PsbQ), PsbU, PsbV and a large number of cofactors. It forms dimeric complexes.

The protein localises to the cellular thylakoid membrane. Functionally, found at the monomer-monomer interface of the photosystem II (PS II) dimer, plays a role in assembly and dimerization of PSII. PSII is a light-driven water plastoquinone oxidoreductase, using light energy to abstract electrons from H(2)O, generating a proton gradient subsequently used for ATP formation. The sequence is that of Photosystem II reaction center protein T from Nostoc sp. (strain PCC 7120 / SAG 25.82 / UTEX 2576).